Consider the following 502-residue polypeptide: T-complex protein 11-like X-linked protein 1 (502 aa).

The tract at residues methionine 1–cysteine 36 is disordered.

It belongs to the TCP11 family.

The protein is T-complex protein 11-like X-linked protein 1 of Homo sapiens (Human).